The following is a 226-amino-acid chain: Octanoyltransferase (226 aa).

The 183-residue stretch at Gly-34–Arg-216 folds into the BPL/LPL catalytic domain. Residues Arg-73–His-80, Ala-145–Gly-147, and Gly-158–Ala-160 contribute to the substrate site. Cys-176 (acyl-thioester intermediate) is an active-site residue.

This sequence belongs to the LipB family.

The protein localises to the cytoplasm. The enzyme catalyses octanoyl-[ACP] + L-lysyl-[protein] = N(6)-octanoyl-L-lysyl-[protein] + holo-[ACP] + H(+). Its pathway is protein modification; protein lipoylation via endogenous pathway; protein N(6)-(lipoyl)lysine from octanoyl-[acyl-carrier-protein]: step 1/2. In terms of biological role, catalyzes the transfer of endogenously produced octanoic acid from octanoyl-acyl-carrier-protein onto the lipoyl domains of lipoate-dependent enzymes. Lipoyl-ACP can also act as a substrate although octanoyl-ACP is likely to be the physiological substrate. The polypeptide is Octanoyltransferase (Maricaulis maris (strain MCS10) (Caulobacter maris)).